Reading from the N-terminus, the 180-residue chain is uncharacterized protein (180 aa).

Residues 35–163 enclose the Nudix hydrolase domain; that stretch reads LRHRATYIVV…TPDSLKALAL (129 aa). Residues 72-94 carry the Nudix box motif; the sequence is GGVVQADEQLLESARREAEEELG. Residues glutamate 88 and glutamate 92 each contribute to the Mg(2+) site.

The protein belongs to the Nudix hydrolase family. It depends on Mg(2+) as a cofactor.

This is an uncharacterized protein from Escherichia coli O157:H7.